A 319-amino-acid polypeptide reads, in one-letter code: UDP-3-O-acylglucosamine N-acyltransferase (319 aa).

Catalysis depends on H230, which acts as the Proton acceptor.

This sequence belongs to the transferase hexapeptide repeat family. LpxD subfamily. As to quaternary structure, homotrimer.

The catalysed reaction is a UDP-3-O-[(3R)-3-hydroxyacyl]-alpha-D-glucosamine + a (3R)-hydroxyacyl-[ACP] = a UDP-2-N,3-O-bis[(3R)-3-hydroxyacyl]-alpha-D-glucosamine + holo-[ACP] + H(+). It functions in the pathway bacterial outer membrane biogenesis; LPS lipid A biosynthesis. Functionally, catalyzes the N-acylation of UDP-3-O-acylglucosamine using 3-hydroxyacyl-ACP as the acyl donor. Is involved in the biosynthesis of lipid A, a phosphorylated glycolipid that anchors the lipopolysaccharide to the outer membrane of the cell. The protein is UDP-3-O-acylglucosamine N-acyltransferase of Campylobacter lari (strain RM2100 / D67 / ATCC BAA-1060).